A 464-amino-acid chain; its full sequence is 3-ketoacyl-CoA synthase 19 (464 aa).

Residues 3 to 25 (LFSLSSLLLLSTLFVFYIFKFVF) form a helical membrane-spanning segment. One can recognise an FAE domain in the interval 24–318 (VFKRRNQRNC…AIVRALKRRT (295 aa)). Catalysis depends on residues Cys-172, His-251, His-339, His-343, His-372, and Asn-376.

The protein belongs to the thiolase-like superfamily. Chalcone/stilbene synthases family. As to expression, expressed in siliques.

It localises to the membrane. The catalysed reaction is a very-long-chain acyl-CoA + malonyl-CoA + H(+) = a very-long-chain 3-oxoacyl-CoA + CO2 + CoA. Its pathway is lipid metabolism; fatty acid biosynthesis. The protein is 3-ketoacyl-CoA synthase 19 of Arabidopsis thaliana (Mouse-ear cress).